The chain runs to 279 residues: uncharacterized protein (279 aa).

The protein belongs to the peptidase C59 family.

This is an uncharacterized protein from Chlorella (PBCV-1).